We begin with the raw amino-acid sequence, 560 residues long: Dihydroxy-acid dehydratase (560 aa).

D78 contacts Mg(2+). C119 serves as a coordination point for [2Fe-2S] cluster. Mg(2+) contacts are provided by D120 and K121. K121 bears the N6-carboxylysine mark. C192 lines the [2Fe-2S] cluster pocket. E446 is a binding site for Mg(2+). S472 acts as the Proton acceptor in catalysis.

It belongs to the IlvD/Edd family. As to quaternary structure, homodimer. It depends on [2Fe-2S] cluster as a cofactor. Mg(2+) is required as a cofactor.

It carries out the reaction (2R)-2,3-dihydroxy-3-methylbutanoate = 3-methyl-2-oxobutanoate + H2O. The enzyme catalyses (2R,3R)-2,3-dihydroxy-3-methylpentanoate = (S)-3-methyl-2-oxopentanoate + H2O. It participates in amino-acid biosynthesis; L-isoleucine biosynthesis; L-isoleucine from 2-oxobutanoate: step 3/4. The protein operates within amino-acid biosynthesis; L-valine biosynthesis; L-valine from pyruvate: step 3/4. In terms of biological role, functions in the biosynthesis of branched-chain amino acids. Catalyzes the dehydration of (2R,3R)-2,3-dihydroxy-3-methylpentanoate (2,3-dihydroxy-3-methylvalerate) into 2-oxo-3-methylpentanoate (2-oxo-3-methylvalerate) and of (2R)-2,3-dihydroxy-3-methylbutanoate (2,3-dihydroxyisovalerate) into 2-oxo-3-methylbutanoate (2-oxoisovalerate), the penultimate precursor to L-isoleucine and L-valine, respectively. This is Dihydroxy-acid dehydratase from Anaeromyxobacter dehalogenans (strain 2CP-C).